The chain runs to 560 residues: MSDILKKRSSMTTDGDNRAPNRAMLRAVGFTDEDFHKPMIGIASTWSEVTPCNIHINKLAEKVKEGVRTAGGVPQIYGTITVSDGITMGHEGMHFSLPSREVIADSIEIVSNAMRHDGVIAIGGCDKNMPGCLMALCRIDAPSIFVYGGTILPGHCDGQDVDIVSIFEAVGKFNAGKISREEFIRIEQNACPGAGSCGGMYTANTMSSAIEALGMSLPGSASMPAVSSRKSEDCYEAGKALINLIQKGVTPKRILTKKAFENAITVVLVLGGSTNAVLHLIAIAKEIGVDLTLEDFDRISKKTPHLADLKPGGRYAMTDLDKVGGVHGVMKYLLKEGMLHGDCLTVTGKTIAENLMDMPDLVPNQTIVRKKSEALHPSGPLVILKGNLAPEGAVAKISGLKKISITGPAKVFESEDDCFNAIMTDQIKPGDVIIIRYEGPKGGPGMREMLAVTSALVGKGLGEDVGLMTDGRFSGGTHGLVVGHISPEAFDGGPIAIVQNGDAVTIDSGKNLLQVEISQEEIQKRLKNWKPIEPRYKSGVLAKYAKLVQSATNGAITNLL.

A [2Fe-2S] cluster-binding site is contributed by C52. D84 contacts Mg(2+). Residue C125 participates in [2Fe-2S] cluster binding. The Mg(2+) site is built by D126 and K127. K127 is modified (N6-carboxylysine). C197 is a binding site for [2Fe-2S] cluster. Residue E448 participates in Mg(2+) binding. The active-site Proton acceptor is the S474.

Belongs to the IlvD/Edd family. In terms of assembly, homodimer. It depends on [2Fe-2S] cluster as a cofactor. Mg(2+) serves as cofactor.

It catalyses the reaction (2R)-2,3-dihydroxy-3-methylbutanoate = 3-methyl-2-oxobutanoate + H2O. The enzyme catalyses (2R,3R)-2,3-dihydroxy-3-methylpentanoate = (S)-3-methyl-2-oxopentanoate + H2O. Its pathway is amino-acid biosynthesis; L-isoleucine biosynthesis; L-isoleucine from 2-oxobutanoate: step 3/4. The protein operates within amino-acid biosynthesis; L-valine biosynthesis; L-valine from pyruvate: step 3/4. In terms of biological role, functions in the biosynthesis of branched-chain amino acids. Catalyzes the dehydration of (2R,3R)-2,3-dihydroxy-3-methylpentanoate (2,3-dihydroxy-3-methylvalerate) into 2-oxo-3-methylpentanoate (2-oxo-3-methylvalerate) and of (2R)-2,3-dihydroxy-3-methylbutanoate (2,3-dihydroxyisovalerate) into 2-oxo-3-methylbutanoate (2-oxoisovalerate), the penultimate precursor to L-isoleucine and L-valine, respectively. The sequence is that of Dihydroxy-acid dehydratase from Leptospira borgpetersenii serovar Hardjo-bovis (strain JB197).